We begin with the raw amino-acid sequence, 158 residues long: UPF0102 protein GbCGDNIH1_0975 (158 aa).

It belongs to the UPF0102 family.

This is UPF0102 protein GbCGDNIH1_0975 from Granulibacter bethesdensis (strain ATCC BAA-1260 / CGDNIH1).